An 81-amino-acid polypeptide reads, in one-letter code: ATP synthase subunit c (81 aa).

2 consecutive transmembrane segments (helical) span residues 5–25 (IAAGALIGGGLIMAGGAIGAG) and 57–77 (VGLVEAAYFINLAFMALFVFA).

The protein belongs to the ATPase C chain family. As to quaternary structure, F-type ATPases have 2 components, F(1) - the catalytic core - and F(0) - the membrane proton channel. F(1) has five subunits: alpha(3), beta(3), gamma(1), delta(1), epsilon(1). F(0) has three main subunits: a(1), b(2) and c(10-14). The alpha and beta chains form an alternating ring which encloses part of the gamma chain. F(1) is attached to F(0) by a central stalk formed by the gamma and epsilon chains, while a peripheral stalk is formed by the delta and b chains.

Its subcellular location is the cell membrane. In terms of biological role, f(1)F(0) ATP synthase produces ATP from ADP in the presence of a proton or sodium gradient. F-type ATPases consist of two structural domains, F(1) containing the extramembraneous catalytic core and F(0) containing the membrane proton channel, linked together by a central stalk and a peripheral stalk. During catalysis, ATP synthesis in the catalytic domain of F(1) is coupled via a rotary mechanism of the central stalk subunits to proton translocation. Key component of the F(0) channel; it plays a direct role in translocation across the membrane. A homomeric c-ring of between 10-14 subunits forms the central stalk rotor element with the F(1) delta and epsilon subunits. The polypeptide is ATP synthase subunit c (Mycobacterium bovis (strain ATCC BAA-935 / AF2122/97)).